We begin with the raw amino-acid sequence, 116 residues long: Protein BIC2 (116 aa).

Disordered regions lie at residues 1-33 (MKNTNLPEETKEPISPGSSHRKQNKTGTKTCFP) and 95-116 (DSGDDAGARGSRPQRLRVESSC).

It localises to the nucleus. Its function is as follows. Regulates the blue-light dependent dimerization of CRY2 and formation of photobodies. Inhibits CRY phosphorylation. The polypeptide is Protein BIC2 (Arabidopsis thaliana (Mouse-ear cress)).